A 324-amino-acid polypeptide reads, in one-letter code: Glyoxylate/hydroxypyruvate reductase B (324 aa).

Catalysis depends on residues arginine 237 and glutamate 266. Catalysis depends on histidine 285, which acts as the Proton donor.

The protein belongs to the D-isomer specific 2-hydroxyacid dehydrogenase family. GhrB subfamily. As to quaternary structure, homodimer.

It is found in the cytoplasm. It catalyses the reaction glycolate + NADP(+) = glyoxylate + NADPH + H(+). The enzyme catalyses (R)-glycerate + NAD(+) = 3-hydroxypyruvate + NADH + H(+). It carries out the reaction (R)-glycerate + NADP(+) = 3-hydroxypyruvate + NADPH + H(+). Functionally, catalyzes the NADPH-dependent reduction of glyoxylate and hydroxypyruvate into glycolate and glycerate, respectively. This Salmonella dublin (strain CT_02021853) protein is Glyoxylate/hydroxypyruvate reductase B.